The chain runs to 182 residues: ATP synthase subunit delta (182 aa).

Belongs to the ATPase delta chain family. In terms of assembly, F-type ATPases have 2 components, F(1) - the catalytic core - and F(0) - the membrane proton channel. F(1) has five subunits: alpha(3), beta(3), gamma(1), delta(1), epsilon(1). F(0) has three main subunits: a(1), b(2) and c(10-14). The alpha and beta chains form an alternating ring which encloses part of the gamma chain. F(1) is attached to F(0) by a central stalk formed by the gamma and epsilon chains, while a peripheral stalk is formed by the delta and b chains.

It localises to the cell inner membrane. In terms of biological role, f(1)F(0) ATP synthase produces ATP from ADP in the presence of a proton or sodium gradient. F-type ATPases consist of two structural domains, F(1) containing the extramembraneous catalytic core and F(0) containing the membrane proton channel, linked together by a central stalk and a peripheral stalk. During catalysis, ATP synthesis in the catalytic domain of F(1) is coupled via a rotary mechanism of the central stalk subunits to proton translocation. Functionally, this protein is part of the stalk that links CF(0) to CF(1). It either transmits conformational changes from CF(0) to CF(1) or is implicated in proton conduction. The polypeptide is ATP synthase subunit delta (Bdellovibrio bacteriovorus (strain ATCC 15356 / DSM 50701 / NCIMB 9529 / HD100)).